The primary structure comprises 692 residues: Proprotein convertase subtilisin/kexin type 9 (692 aa).

The first 30 residues, 1-30 (MGTVSSRRSWWPLPLLLLLLLLLGPAGARA), serve as a signal peptide directing secretion. Positions 31 to 152 (QEDEDGDYEE…IEEDSSVFAQ (122 aa)) are excised as a propeptide. Tyr38 is subject to Sulfotyrosine. Ser47 is subject to Phosphoserine. The region spanning 77-149 (TYVVVLKEET…VDYIEEDSSV (73 aa)) is the Inhibitor I9 domain. The Peptidase S8 domain occupies 155-461 (PWNLERITPP…GWQLFCRTVW (307 aa)). Residues Asp186 and His226 each act as charge relay system in the active site. Disulfide bonds link Cys223-Cys255 and Cys323-Cys358. Ser386 serves as the catalytic Charge relay system. The segment at 450-692 (GAGWQLFCRT…HLAQASQELQ (243 aa)) is C-terminal domain. 3 disulfide bridges follow: Cys457-Cys527, Cys477-Cys526, and Cys486-Cys509. A glycan (N-linked (GlcNAc...) asparagine) is linked at Asn533. Disulfide bonds link Cys534/Cys601, Cys552/Cys600, Cys562/Cys588, Cys608/Cys679, Cys626/Cys678, and Cys635/Cys654. A Phosphoserine modification is found at Ser688.

This sequence belongs to the peptidase S8 family. Monomer. Can self-associate to form dimers and higher multimers which may have increased LDLR degrading activity. The precursor protein but not the mature protein may form multimers. Interacts with APOB, VLDLR, LRP8/APOER2 and BACE1. The full-length immature form (pro-PCSK9) interacts with SCNN1A, SCNN1B and SCNN1G. The pro-PCSK9 form (via C-terminal domain) interacts with LDLR. Interacts (via the C-terminal domain) with ANXA2 (via repeat Annexin 1); the interaction inhibits the degradation of LDLR. Requires Ca(2+) as cofactor. Post-translationally, cleavage by furin and PCSK5 generates a truncated inactive protein that is unable to induce LDLR degradation. In terms of processing, undergoes autocatalytic cleavage in the endoplasmic reticulum to release the propeptide from the N-terminus and the cleavage of the propeptide is strictly required for its maturation and activation. The cleaved propeptide however remains associated with the catalytic domain through non-covalent interactions, preventing potential substrates from accessing its active site. As a result, it is secreted from cells as a propeptide-containing, enzymatically inactive protein. Phosphorylation protects the propeptide against proteolysis.

Its subcellular location is the cytoplasm. The protein localises to the secreted. It localises to the endosome. The protein resides in the lysosome. It is found in the cell surface. Its subcellular location is the endoplasmic reticulum. The protein localises to the golgi apparatus. With respect to regulation, its proteolytic activity is autoinhibited by the non-covalent binding of the propeptide to the catalytic domain. Inhibited by EGTA. Its function is as follows. Crucial player in the regulation of plasma cholesterol homeostasis. Binds to low-density lipid receptor family members: low density lipoprotein receptor (LDLR), very low density lipoprotein receptor (VLDLR), apolipoprotein E receptor (LRP1/APOER) and apolipoprotein receptor 2 (LRP8/APOER2), and promotes their degradation in intracellular acidic compartments. Acts via a non-proteolytic mechanism to enhance the degradation of the hepatic LDLR through a clathrin LDLRAP1/ARH-mediated pathway. May prevent the recycling of LDLR from endosomes to the cell surface or direct it to lysosomes for degradation. Can induce ubiquitination of LDLR leading to its subsequent degradation. Inhibits intracellular degradation of APOB via the autophagosome/lysosome pathway in a LDLR-independent manner. Involved in the disposal of non-acetylated intermediates of BACE1 in the early secretory pathway. Inhibits epithelial Na(+) channel (ENaC)-mediated Na(+) absorption by reducing ENaC surface expression primarily by increasing its proteasomal degradation. Regulates neuronal apoptosis via modulation of LRP8/APOER2 levels and related anti-apoptotic signaling pathways. The chain is Proprotein convertase subtilisin/kexin type 9 (PCSK9) from Pan troglodytes (Chimpanzee).